Reading from the N-terminus, the 477-residue chain is Probable cytosolic Fe-S cluster assembly factor CG17683 (477 aa).

Cysteine 23, cysteine 68, cysteine 71, cysteine 74, cysteine 187, cysteine 243, cysteine 395, and cysteine 399 together coordinate [4Fe-4S] cluster.

The protein belongs to the NARF family.

Its function is as follows. Component of the cytosolic iron-sulfur (Fe/S) protein assembly machinery. Required for maturation of extramitochondrial Fe/S proteins. The chain is Probable cytosolic Fe-S cluster assembly factor CG17683 from Drosophila melanogaster (Fruit fly).